A 54-amino-acid polypeptide reads, in one-letter code: Toxin AnmTx Cj 1c-1 (54 aa).

A signal peptide spans 1–7; that stretch reads MLNKRGV. Intrachain disulfides connect cysteine 9/cysteine 50, cysteine 11/cysteine 41, and cysteine 33/cysteine 51. The residue at position 53 (glutamate 53) is a Glutamic acid 1-amide.

The protein belongs to the sea anemone sodium channel inhibitory toxin family. Type I subfamily. Post-translationally, contains 3 disulfide bonds.

The protein resides in the secreted. Its subcellular location is the nematocyst. Functionally, in vivo, induces marked paralysis on shrimps (C.multidentata) at 10-20 seconds after injection and a weak toxicity when injected into insect larvae (M.domestica). The sequence is that of Toxin AnmTx Cj 1c-1 from Epiactis japonica (Sea anemone).